Here is a 62-residue protein sequence, read N- to C-terminus: Large ribosomal subunit protein eL19 (62 aa).

Belongs to the eukaryotic ribosomal protein eL19 family.

This Zea mays (Maize) protein is Large ribosomal subunit protein eL19 (RPL19).